A 443-amino-acid chain; its full sequence is KH domain-containing, RNA-binding, signal transduction-associated protein 1 (443 aa).

Residues 1–94 (MQRRDDPASR…PLLPPSATAA (94 aa)) are disordered. Ser18 and Ser20 each carry phosphoserine. The residue at position 21 (Lys21) is an N6-acetyllysine. Phosphoserine is present on Ser29. The residue at position 33 (Thr33) is a Phosphothreonine. Asymmetric dimethylarginine; by PRMT1 occurs at positions 45 and 52. At Ser58 the chain carries Phosphoserine; by MAPK1. The span at 61–72 (TQPPPLLPPSTP) shows a compositional bias: pro residues. 2 positions are modified to phosphothreonine; by MAPK1: Thr71 and Thr84. Residues 81–94 (SAPTPLLPPSATAA) are compositionally biased toward low complexity. Glycyl lysine isopeptide (Lys-Gly) (interchain with G-Cter in SUMO2) cross-links involve residues Lys96 and Lys102. The segment at 100–260 (ENKYLPELMA…VKKFLVPDMM (161 aa)) is involved in homodimerization. Ser113 carries the phosphoserine modification. Lys139 participates in a covalent cross-link: Glycyl lysine isopeptide (Lys-Gly) (interchain with G-Cter in SUMO2). Ser150 carries the post-translational modification Phosphoserine. Positions 171–197 (NFVGKILGPQGNTIKRLQEETGAKISV) constitute a KH domain. Lys175 bears the N6-acetyllysine; alternate mark. A Glycyl lysine isopeptide (Lys-Gly) (interchain with G-Cter in SUMO2); alternate cross-link involves residue Lys175. Position 183 is a phosphothreonine (Thr183). Positions 280–317 (PSRGRGVSVRGRGAAPPPPPVPRGRGVGPPRGALVRGT) are disordered. Omega-N-methylarginine is present on residues Arg282, Arg284, and Arg291. Over residues 283-293 (GRGVSVRGRGA) the composition is skewed to low complexity. The residue at position 304 (Arg304) is an Asymmetric dimethylarginine. Positions 307–316 (GPPRGALVRG) are enriched in low complexity. Residues Arg310 and Arg315 each carry the omega-N-methylarginine; by PRMT1 modification. Position 320 is a dimethylated arginine; alternate (Arg320). Omega-N-methylarginine; by PRMT1; alternate is present on Arg320. Position 325 is an omega-N-methylarginine; by PRMT1 (Arg325). The segment at 326 to 345 (GATVTRGVPPPPTVRGAPTP) is disordered. Dimethylated arginine; alternate occurs at positions 331 and 340. An omega-N-methylarginine; by PRMT1; alternate mark is found at Arg331 and Arg340. At Arg331 the chain carries Asymmetric dimethylarginine; alternate. Residues 351–443 (GIQRIPLPPT…AYREHPYGRY (93 aa)) form an interaction with HNRNPA1 region. Tyr387 is modified (phosphotyrosine). Position 390 is a phosphoserine (Ser390). The interaction with ZBTB7A stretch occupies residues 400-420 (GHGELQDSYEAYGQDDWNGTR). The segment at 411–443 (YGQDDWNGTRPSLKAPPARPVKGAYREHPYGRY) is disordered. Lys432 is covalently cross-linked (Glycyl lysine isopeptide (Lys-Gly) (interchain with G-Cter in SUMO2)). Over residues 434-443 (AYREHPYGRY) the composition is skewed to basic and acidic residues. Residues Tyr435, Tyr440, and Tyr443 each carry the phosphotyrosine; by PTK6 modification.

This sequence belongs to the KHDRBS family. In terms of assembly, self-associates to form homooligomers when bound to RNA, oligomerization appears to be limited when binding to proteins. Forms a trimeric complex in the nucleus consisting of BANP, HDAC6 and KHDRBS1/SAM68; HDAC6 keeps KHDRBS1 in a deacetylated state which inhibits the inclusion of CD44 alternate exons. The complex is disrupted by MAPK1/MAPK3-mediated phosphorylation of BANP which results in BANP export to the cytoplasm. This facilitates acetylation of KHDRBS1 and CD44 variant exon inclusion. Interacts with KHDRBS3/SLIM-2 and KHDRBS2/SLIM-1; heterooligomer formation of KHDRBS family proteins may modulate RNA substrate specificity. Interacts with RASA1, FYN, GRB2, PLCG1, SRC, CBP and PRMT1. Interacts with PTK6 (via SH3 and SH2 domains). Forms a complex with ILF2, ILF3, YLPM1, RBMX, NCOA5 and PPP1CA. Binds WBP4/FBP21 (via WW domains), FNBP4/FBP30 (via WW domains). Interacts (via Arg/Gly-rich-flanked Pro-rich regions) with FYN (via the SH3 domain). Interacts with APC, HNRNPA1. Interacts with the non-receptor tyrosine kinase SRMS; the interaction leads to phosphorylation of KHDRBS1. Interacts with ZBTB7A; negatively regulates KHDRBS1 splicing activity toward BCL2L1. Tyrosine phosphorylated by several non-receptor tyrosine kinases including LCK, FYN and JAK3. Also tyrosine phosphorylated by the non-receptor tyrosine kinase SRMS in an EGF-dependent manner. Phosphorylation by PTK6 negatively regulates its RNA binding ability. Phosphorylation by PTK6 at Tyr-440 dictates the nuclear localization of KHDRBS1. Phosphorylation by MAPK1 at Ser-58, Thr-71 and Thr-84 regulates CD44 alternative splicing by promoting CD44 exon v5 inclusion. Post-translationally, acetylated. Positively correlates with ability to bind RNA. Deacetylated by HDAC6; this regulates alternative splicing by inhibiting the inclusion of CD44 alternate exons. In terms of processing, arginine methylation is required for nuclear localization. Inhibits interaction with Src-like SH3 domains, but not interaction with WW domains of WBP4/FBP21 and FNBP4/FBP30. In terms of tissue distribution, in adult cerebellum expressed in most neuronal cell populations, specifically in cerebellar granule cells of the internal granular layer, ROR(alpha)-positive Purkinje cells, internal granular layer and molecular layer interneurons (at protein level).

It localises to the nucleus. Its subcellular location is the cytoplasm. The protein resides in the membrane. In terms of biological role, recruited and tyrosine phosphorylated by several receptor systems, for example the T-cell, leptin and insulin receptors. Once phosphorylated, functions as an adapter protein in signal transduction cascades by binding to SH2 and SH3 domain-containing proteins. Role in G2-M progression in the cell cycle. Represses CBP-dependent transcriptional activation apparently by competing with other nuclear factors for binding to CBP. Also acts as a putative regulator of mRNA stability and/or translation rates and mediates mRNA nuclear export. Positively regulates the association of constitutive transport element (CTE)-containing mRNA with large polyribosomes and translation initiation. May not be involved in the nucleocytoplasmic export of unspliced (CTE)-containing RNA species. RNA-binding protein that plays a role in the regulation of alternative splicing and influences mRNA splice site selection and exon inclusion. Binds to RNA containing 5'-[AU]UAA-3' as a bipartite motif spaced by more than 15 nucleotides. Binds poly(A). In cooperation with HNRNPA1 modulates alternative splicing of BCL2L1 by promoting splicing toward isoform Bcl-X(S), and of SMN1. Can regulate CD44 alternative splicing in a Ras pathway-dependent manner. Can regulate alternative splicing of NRXN1 and NRXN3 in the laminin G-like domain 6 containing the evolutionary conserved neurexin alternative spliced segment 4 (AS4) involved in neurexin selective targeting to postsynaptic partners. In a neuronal activity-dependent manner cooperates synergistically with KHDRBS2/SLIM-1 in regulation of NRXN1 exon skipping at AS4. The cooperation with KHDRBS2/SLIM-1 is antagonistic for regulation of NXRN3 alternative splicing at AS4. The polypeptide is KH domain-containing, RNA-binding, signal transduction-associated protein 1 (Mus musculus (Mouse)).